A 61-amino-acid chain; its full sequence is Small ribosomal subunit protein uS14 (61 aa).

Zn(2+)-binding residues include Cys24, Cys27, Cys40, and Cys43.

The protein belongs to the universal ribosomal protein uS14 family. Zinc-binding uS14 subfamily. In terms of assembly, part of the 30S ribosomal subunit. Contacts proteins S3 and S10. The cofactor is Zn(2+).

Functionally, binds 16S rRNA, required for the assembly of 30S particles and may also be responsible for determining the conformation of the 16S rRNA at the A site. In Acetivibrio thermocellus (strain ATCC 27405 / DSM 1237 / JCM 9322 / NBRC 103400 / NCIMB 10682 / NRRL B-4536 / VPI 7372) (Clostridium thermocellum), this protein is Small ribosomal subunit protein uS14.